Reading from the N-terminus, the 913-residue chain is Calcium-activated chloride channel regulator 1 (913 aa).

A signal peptide spans 1-21 (MGSFKSSVFILVLHLLEGALS). Residues 46–199 (DETLIQQIKD…DIAGKNVVNH (154 aa)) form a metalloprotease domain region. Histidine 156 serves as a coordination point for Zn(2+). Residue glutamate 157 is part of the active site. 2 residues coordinate Zn(2+): histidine 160 and asparagine 167. The VWFA domain maps to 306–475 (IVCLVLDKSG…NGLIDAFGAL (170 aa)). N-linked (GlcNAc...) asparagine glycans are attached at residues asparagine 503, asparagine 514, asparagine 770, asparagine 804, asparagine 810, asparagine 836, and asparagine 885.

The protein belongs to the CLCR family. Post-translationally, glycosylated. The translation product is autoproteolytically cleaved by the metalloprotease domain in the endoplasmic reticulum into a N-terminal and a C-terminal products that remain physically associated with each other. The cleavage is necessary for calcium-activated chloride channel (CaCC) activation activity. In terms of tissue distribution, expressed in mucin-producing cells in the respiratory and intestinal tracts, cutaneous sweat glands, and renal mucous glands (at protein level). Strong overexpression in the airways of horses with recurrent airway obstruction (at protein level).

The protein resides in the secreted. The protein localises to the extracellular space. Functionally, may be involved in mediating calcium-activated chloride conductance. May play critical roles in goblet cell metaplasia, mucus hypersecretion, cystic fibrosis and AHR. May be involved in the regulation of mucus production and/or secretion by goblet cells. Involved in the regulation of tissue inflammation in the innate immune response. May play a role as a tumor suppressor. Induces MUC5AC. In Equus caballus (Horse), this protein is Calcium-activated chloride channel regulator 1 (CLCA1).